Reading from the N-terminus, the 444-residue chain is Glutamate--methylamine ligase (444 aa).

The GS beta-grasp domain occupies 14–97; that stretch reads HHVKYVLAQF…LVCDGHVNGK (84 aa). The region spanning 103–444 is the GS catalytic domain; sequence TRVVLKQQIA…WEINRYVQFY (342 aa).

It belongs to the glutamine synthetase family. Type 3 subfamily. Mg(2+) serves as cofactor.

The enzyme catalyses methylamine + L-glutamate + ATP = N(5)-methyl-L-glutamine + ADP + phosphate + H(+). It catalyses the reaction ethylamine + L-glutamate + ATP = N(5)-ethyl-L-glutamine + ADP + phosphate + H(+). Formation of theanine is repressed by a high concentration of glutamic acid. In terms of biological role, catalyzes the formation of N(5)-methyl-L-glutamine from glutamate and methylamine. In vitro, can also use ethylamine, hydroxylamine and ammonia, with 75%, 40% and 1% activity compared to methylamine, respectively. This chain is Glutamate--methylamine ligase, found in Methylovorus mays.